The chain runs to 211 residues: Uracil phosphoribosyltransferase (211 aa).

Residues R79, R104, and 131 to 139 (DPMLATGGS) contribute to the 5-phospho-alpha-D-ribose 1-diphosphate site. Uracil contacts are provided by residues I196 and 201-203 (GDA). D202 provides a ligand contact to 5-phospho-alpha-D-ribose 1-diphosphate.

Belongs to the UPRTase family. The cofactor is Mg(2+).

It carries out the reaction UMP + diphosphate = 5-phospho-alpha-D-ribose 1-diphosphate + uracil. It participates in pyrimidine metabolism; UMP biosynthesis via salvage pathway; UMP from uracil: step 1/1. With respect to regulation, allosterically activated by GTP. Its function is as follows. Catalyzes the conversion of uracil and 5-phospho-alpha-D-ribose 1-diphosphate (PRPP) to UMP and diphosphate. This is Uracil phosphoribosyltransferase from Lactococcus lactis subsp. cremoris (strain MG1363).